The primary structure comprises 129 residues: Protein Turandot C (129 aa).

A signal peptide spans 1 to 21 (MNASISLLCFALLLISPFCLG).

It belongs to the Turandot family.

It is found in the secreted. A humoral factor that may play a role in stress tolerance. The chain is Protein Turandot C from Drosophila sechellia (Fruit fly).